The primary structure comprises 185 residues: Serine/arginine-rich splicing factor RSZ21A (185 aa).

Residues 2–73 (ARVYVGNLDP…WRVELSRNAS (72 aa)) form the RRM domain. The CCHC-type zinc finger occupies 87 to 104 (SKCYECGETGHFARECRL). Positions 109–185 (GGLGSGRRRS…YDNGYRRSRS (77 aa)) are disordered. Basic residues predominate over residues 114 to 131 (GRRRSRSRSRSRSPRYRR). 2 stretches are compositionally biased toward low complexity: residues 132-145 (SPSY…PAGR) and 152-163 (VSPARARSYSRS).

It belongs to the splicing factor SR family. In terms of processing, extensively phosphorylated on serine residues in the RS domain. Expressed in roots, leaves and immature seeds.

The protein localises to the nucleus. In terms of biological role, involved in pre-mRNA splicing. This chain is Serine/arginine-rich splicing factor RSZ21A (RSZ21A), found in Oryza sativa subsp. japonica (Rice).